Reading from the N-terminus, the 158-residue chain is Cyclic pyranopterin monophosphate synthase (158 aa).

Residues 76–78 (LCH) and 114–115 (ME) contribute to the substrate site. Residue Asp129 is part of the active site.

It belongs to the MoaC family. In terms of assembly, homohexamer; trimer of dimers.

It catalyses the reaction (8S)-3',8-cyclo-7,8-dihydroguanosine 5'-triphosphate = cyclic pyranopterin phosphate + diphosphate. The protein operates within cofactor biosynthesis; molybdopterin biosynthesis. Catalyzes the conversion of (8S)-3',8-cyclo-7,8-dihydroguanosine 5'-triphosphate to cyclic pyranopterin monophosphate (cPMP). The chain is Cyclic pyranopterin monophosphate synthase from Shewanella piezotolerans (strain WP3 / JCM 13877).